The primary structure comprises 211 residues: FMN-dependent NADH:quinone oxidoreductase 2 (211 aa).

An FMN-binding site is contributed by 17–19; that stretch reads SYS.

Belongs to the azoreductase type 1 family. As to quaternary structure, homodimer. FMN is required as a cofactor.

The catalysed reaction is 2 a quinone + NADH + H(+) = 2 a 1,4-benzosemiquinone + NAD(+). The enzyme catalyses N,N-dimethyl-1,4-phenylenediamine + anthranilate + 2 NAD(+) = 2-(4-dimethylaminophenyl)diazenylbenzoate + 2 NADH + 2 H(+). Its function is as follows. Quinone reductase that provides resistance to thiol-specific stress caused by electrophilic quinones. Functionally, also exhibits azoreductase activity. Catalyzes the reductive cleavage of the azo bond in aromatic azo compounds to the corresponding amines. This Bacillus licheniformis (strain ATCC 14580 / DSM 13 / JCM 2505 / CCUG 7422 / NBRC 12200 / NCIMB 9375 / NCTC 10341 / NRRL NRS-1264 / Gibson 46) protein is FMN-dependent NADH:quinone oxidoreductase 2.